A 160-amino-acid polypeptide reads, in one-letter code: NADH-quinone oxidoreductase subunit B (160 aa).

Residues C37, C38, C102, and C132 each coordinate [4Fe-4S] cluster.

This sequence belongs to the complex I 20 kDa subunit family. As to quaternary structure, NDH-1 is composed of 14 different subunits. Subunits NuoB, C, D, E, F, and G constitute the peripheral sector of the complex. [4Fe-4S] cluster serves as cofactor.

The protein resides in the cell inner membrane. The enzyme catalyses a quinone + NADH + 5 H(+)(in) = a quinol + NAD(+) + 4 H(+)(out). NDH-1 shuttles electrons from NADH, via FMN and iron-sulfur (Fe-S) centers, to quinones in the respiratory chain. Couples the redox reaction to proton translocation (for every two electrons transferred, four hydrogen ions are translocated across the cytoplasmic membrane), and thus conserves the redox energy in a proton gradient. In Neisseria gonorrhoeae (strain ATCC 700825 / FA 1090), this protein is NADH-quinone oxidoreductase subunit B.